Consider the following 337-residue polypeptide: tRNA N6-adenosine threonylcarbamoyltransferase (337 aa).

Residues histidine 111 and histidine 115 each contribute to the Fe cation site. Residues 134-138 (LVSGG), aspartate 167, glycine 180, and asparagine 272 each bind substrate. Aspartate 300 is a binding site for Fe cation.

Belongs to the KAE1 / TsaD family. It depends on Fe(2+) as a cofactor.

Its subcellular location is the cytoplasm. It carries out the reaction L-threonylcarbamoyladenylate + adenosine(37) in tRNA = N(6)-L-threonylcarbamoyladenosine(37) in tRNA + AMP + H(+). Functionally, required for the formation of a threonylcarbamoyl group on adenosine at position 37 (t(6)A37) in tRNAs that read codons beginning with adenine. Is involved in the transfer of the threonylcarbamoyl moiety of threonylcarbamoyl-AMP (TC-AMP) to the N6 group of A37, together with TsaE and TsaB. TsaD likely plays a direct catalytic role in this reaction. This chain is tRNA N6-adenosine threonylcarbamoyltransferase, found in Shewanella sediminis (strain HAW-EB3).